The following is a 192-amino-acid chain: UPF0312 protein Pput_4854 (192 aa).

The signal sequence occupies residues 1–23 (MLKKTFAALALGTALLSAGQAMA).

It belongs to the UPF0312 family. Type 1 subfamily.

It is found in the periplasm. The sequence is that of UPF0312 protein Pput_4854 from Pseudomonas putida (strain ATCC 700007 / DSM 6899 / JCM 31910 / BCRC 17059 / LMG 24140 / F1).